Reading from the N-terminus, the 989-residue chain is DNA-binding protein SMUBP-2 (989 aa).

N-acetylalanine is present on Ala-2. ATP contacts are provided by residues 213-220 (GPPGTGKT), Gln-402, Tyr-441, and Glu-570. An SS DNA-binding region spans residues 637–783 (TAFEYLDDIV…KARHITVSRK (147 aa)). Disordered regions lie at residues 650–717 (YTHE…GCDR), 765–818 (LRHD…GQPH), and 833–869 (LQRQ…TKGP). The segment covering 677 to 690 (EQENGQEARAAAGQ) has biased composition (low complexity). In terms of domain architecture, R3H spans 721–784 (IDRTEHFRAM…ARHITVSRKS (64 aa)). The segment covering 765 to 775 (LRHDSTGEGKA) has biased composition (basic and acidic residues). 2 positions are modified to phosphoserine: Ser-797 and Ser-800. Positions 833-842 (LQRQQGSQAQ) are enriched in low complexity. Positions 860 to 864 (KKKKK) match the Nuclear localization signal motif. The AN1-type zinc finger occupies 885 to 934 (IKADNTCSFAKCTASTTTLGQFCMHCSRRYCLSHHLPEIHGCGEKARAHA). Zn(2+) contacts are provided by Cys-891, Cys-896, Cys-907, Cys-910, Cys-915, His-918, His-924, and Cys-926. Over residues 954 to 972 (ALDPAKRAQLQRRLDKKLG) the composition is skewed to basic and acidic residues. Residues 954–989 (ALDPAKRAQLQRRLDKKLGELSSQRTSKRKEKERGT) are disordered.

Belongs to the DNA2/NAM7 helicase family. Homooligomer. Interacts with RUVBL1. Interacts with RUVBL2. Interacts with GTF3C1. Interacts with ABT1. Interacts with ribosomes. As to expression, high expression in brain and testis, moderate in heart, spleen, and kidney, and low in other tissues.

Its subcellular location is the nucleus. It localises to the cytoplasm. The protein resides in the cell projection. The protein localises to the axon. The catalysed reaction is ATP + H2O = ADP + phosphate + H(+). Its function is as follows. 5' to 3' helicase that unwinds RNA and DNA duplexes in an ATP-dependent reaction. Specific to 5'-phosphorylated single-stranded guanine-rich sequences. May play a role in RNA metabolism, ribosome biogenesis or initiation of translation. May play a role in regulation of transcription. Interacts with tRNA-Tyr. This chain is DNA-binding protein SMUBP-2 (IGHMBP2), found in Mesocricetus auratus (Golden hamster).